Consider the following 462-residue polypeptide: Hydroxymethylglutaryl-CoA synthase (462 aa).

Glutamate 92 acts as the Proton donor/acceptor in catalysis. Cysteine 124 functions as the Acyl-thioester intermediate in the catalytic mechanism. (3S)-3-hydroxy-3-methylglutaryl-CoA-binding residues include cysteine 124, threonine 167, serine 219, histidine 257, lysine 266, asparagine 327, and serine 360. Histidine 257 (proton donor/acceptor) is an active-site residue. Residue lysine 408 forms a Glycyl lysine isopeptide (Lys-Gly) (interchain with G-Cter in SUMO) linkage.

It belongs to the thiolase-like superfamily. HMG-CoA synthase family. In terms of processing, ubiquitinated.

The catalysed reaction is acetoacetyl-CoA + acetyl-CoA + H2O = (3S)-3-hydroxy-3-methylglutaryl-CoA + CoA + H(+). It participates in metabolic intermediate biosynthesis; (R)-mevalonate biosynthesis; (R)-mevalonate from acetyl-CoA: step 2/3. In terms of biological role, this enzyme condenses acetyl-CoA with acetoacetyl-CoA to form HMG-CoA, which is the substrate for HMG-CoA reductase. The chain is Hydroxymethylglutaryl-CoA synthase from Caenorhabditis elegans.